Consider the following 346-residue polypeptide: 3 beta-hydroxysteroid dehydrogenase/Delta 5--&gt;4-isomerase (346 aa).

Residue Tyr147 is the Proton acceptor of the active site. Lys151 is a binding site for NAD(+).

This sequence belongs to the 3-beta-HSD family.

The enzyme catalyses a 3beta-hydroxy-Delta(5)-steroid + NAD(+) = a 3-oxo-Delta(5)-steroid + NADH + H(+). It carries out the reaction a 3-oxo-Delta(5)-steroid = a 3-oxo-Delta(4)-steroid. It functions in the pathway lipid metabolism; steroid biosynthesis. In terms of biological role, catalyzes the oxidative conversion of Delta(5)-ene-3-beta-hydroxy steroid, and the oxidative conversion of ketosteroids. The 3-beta-HSD enzymatic system plays a crucial role in the biosynthesis of all classes of hormonal steroids. During viral infection, steroid production contributes to virulence by inhibiting the host inflammatory response. The chain is 3 beta-hydroxysteroid dehydrogenase/Delta 5--&gt;4-isomerase (OPG174) from Vaccinia virus (strain Western Reserve) (VACV).